Consider the following 629-residue polypeptide: tRNA uridine 5-carboxymethylaminomethyl modification enzyme MnmG (629 aa).

FAD contacts are provided by residues 13–18 (GGGHAG), Val-125, and Ser-180. 273–287 (GPRYCPSIEDKVMRF) is a binding site for NAD(+). Gln-370 lines the FAD pocket.

It belongs to the MnmG family. As to quaternary structure, homodimer. Heterotetramer of two MnmE and two MnmG subunits. FAD is required as a cofactor.

The protein resides in the cytoplasm. Its function is as follows. NAD-binding protein involved in the addition of a carboxymethylaminomethyl (cmnm) group at the wobble position (U34) of certain tRNAs, forming tRNA-cmnm(5)s(2)U34. This chain is tRNA uridine 5-carboxymethylaminomethyl modification enzyme MnmG, found in Psychromonas ingrahamii (strain DSM 17664 / CCUG 51855 / 37).